We begin with the raw amino-acid sequence, 207 residues long: Large ribosomal subunit protein bL25 (207 aa).

The tract at residues Met-1–Arg-20 is disordered.

It belongs to the bacterial ribosomal protein bL25 family. CTC subfamily. Part of the 50S ribosomal subunit; part of the 5S rRNA/L5/L18/L25 subcomplex. Contacts the 5S rRNA. Binds to the 5S rRNA independently of L5 and L18.

Its function is as follows. This is one of the proteins that binds to the 5S RNA in the ribosome where it forms part of the central protuberance. This is Large ribosomal subunit protein bL25 from Xylella fastidiosa (strain M23).